The following is a 267-amino-acid chain: Membrane-spanning 4-domains subfamily A member 12 (267 aa).

Topologically, residues 1–91 (MMSSKPTSHA…MNFKEEAKAL (91 aa)) are cytoplasmic. The chain crosses the membrane as a helical span at residues 92-112 (GVIQIMVGLMHIGFGIVLCLI). The Extracellular portion of the chain corresponds to 113 to 120 (SFSFREVL). Residues 121–141 (GFASTAVIGGYPFWGGLSFII) form a helical membrane-spanning segment. Topologically, residues 142 to 160 (SGSLSVSASKELSRCLVKG) are cytoplasmic. The chain crosses the membrane as a helical span at residues 161 to 181 (SLGMNIVSSILAFIGVILLLV). The Extracellular segment spans residues 182–200 (DMCINGVAGQDYWAVLSGK). The chain crosses the membrane as a helical span at residues 201–221 (GISATLMIFSLLEFFVACATA). Topologically, residues 222-267 (HFANQANTTTNMSVLVIPNMYESNPVTPASSSAPPRCNNYSANAPK) are cytoplasmic. The tract at residues 248 to 267 (TPASSSAPPRCNNYSANAPK) is disordered.

This sequence belongs to the MS4A family.

It is found in the membrane. In terms of biological role, may be involved in signal transduction as a component of a multimeric receptor complex. The sequence is that of Membrane-spanning 4-domains subfamily A member 12 (MS4A12) from Homo sapiens (Human).